A 376-amino-acid polypeptide reads, in one-letter code: N-glycosylase/DNA lyase (376 aa).

Residues Asn134, Arg139, and Arg189 each contribute to the DNA site. Lys241 functions as the Schiff-base intermediate with DNA in the catalytic mechanism. Residues Pro258 and Asp260 each coordinate 8-oxoguanine. A DNA-binding site is contributed by His262. Residues Gln320 and Phe324 each coordinate 8-oxoguanine.

It belongs to the type-1 OGG1 family.

The protein localises to the nucleus. It catalyses the reaction 2'-deoxyribonucleotide-(2'-deoxyribose 5'-phosphate)-2'-deoxyribonucleotide-DNA = a 3'-end 2'-deoxyribonucleotide-(2,3-dehydro-2,3-deoxyribose 5'-phosphate)-DNA + a 5'-end 5'-phospho-2'-deoxyribonucleoside-DNA + H(+). DNA repair enzyme that incises DNA at 8-oxoG residues. Excises 7,8-dihydro-8-oxoguanine and 2,6-diamino-4-hydroxy-5-N-methylformamidopyrimidine (FAPY) from damaged DNA. Has a beta-lyase activity that nicks DNA 3' to the lesion. In Saccharomyces cerevisiae (strain ATCC 204508 / S288c) (Baker's yeast), this protein is N-glycosylase/DNA lyase (OGG1).